The following is a 186-amino-acid chain: Elongation factor P (186 aa).

The protein belongs to the elongation factor P family.

The protein resides in the cytoplasm. Its pathway is protein biosynthesis; polypeptide chain elongation. Its function is as follows. Involved in peptide bond synthesis. Stimulates efficient translation and peptide-bond synthesis on native or reconstituted 70S ribosomes in vitro. Probably functions indirectly by altering the affinity of the ribosome for aminoacyl-tRNA, thus increasing their reactivity as acceptors for peptidyl transferase. The protein is Elongation factor P of Enterococcus faecalis (strain ATCC 700802 / V583).